A 71-amino-acid chain; its full sequence is Pro-glucagon (71 aa).

It belongs to the glucagon family.

It localises to the secreted. In terms of biological role, plays a key role in glucose metabolism and homeostasis. Regulates blood glucose by increasing gluconeogenesis and decreasing glycolysis. The sequence is that of Pro-glucagon (gcg) from Piaractus mesopotamicus (Small-scaled pacu).